The sequence spans 708 residues: DNA-directed RNA polymerase III subunit RPC5 (708 aa).

A compositionally biased stretch (basic and acidic residues) spans 146-155; the sequence is DAKHREREAA. The interval 146–170 is disordered; the sequence is DAKHREREAANEAGDSSQDEAEDDV. A phosphoserine mark is found at Ser161 and Ser162. Lys171 participates in a covalent cross-link: Glycyl lysine isopeptide (Lys-Gly) (interchain with G-Cter in SUMO2). At Ser192 the chain carries Phosphoserine. The residue at position 224 (Tyr224) is a Phosphotyrosine. Lys432 is covalently cross-linked (Glycyl lysine isopeptide (Lys-Gly) (interchain with G-Cter in SUMO2)). The segment at 485–552 is disordered; sequence QLRVPAVPPG…DSFNGHPPQG (68 aa). Lys498 is covalently cross-linked (Glycyl lysine isopeptide (Lys-Gly) (interchain with G-Cter in SUMO1); alternate). Lys498 participates in a covalent cross-link: Glycyl lysine isopeptide (Lys-Gly) (interchain with G-Cter in SUMO2); alternate. Positions 502 to 519 are enriched in acidic residues; sequence VSEEGEEDEEQEAEEEPM. A phosphoserine mark is found at Ser503 and Ser522. The segment at 556 to 708 is required for Pol III complex stability; that stretch reads TPVARELKAF…MWYLKGTVQS (153 aa). Lys659 participates in a covalent cross-link: Glycyl lysine isopeptide (Lys-Gly) (interchain with G-Cter in SUMO2).

In terms of assembly, component of the RNA polymerase III complex consisting of at least 17 subunits: a ten-subunit horseshoe-shaped catalytic core composed of POLR3A/RPC1, POLR3B/RPC2, POLR1C/RPAC1, POLR1D/RPAC2, POLR3K/RPC10, POLR2E/RPABC1, POLR2F/RPABC2, POLR2H/RPABC3, POLR2K/RPABC4 and POLR2L/RPABC5; the stalk composed of two subunits POLR3H/RPC8 and CRCP/RPC9, forming a structural mobile part that protrudes out of the core and functions primarily in transcription initiation; and additional subunits homologous to general transcription factors of the RNA polymerase II machinery, POLR3D/RPC4-POLR3E/RPC5 heterodimer and POLR3/CRPC3-POLR3F/RPC6-POLR3G/RPC7 heterotrimer.

It localises to the nucleus. DNA-dependent RNA polymerase catalyzes the transcription of DNA into RNA using the four ribonucleoside triphosphates as substrates. Specific peripheric component of RNA polymerase III (Pol III) which synthesizes small non-coding RNAs including 5S rRNA, snRNAs, tRNAs and miRNAs from at least 500 distinct genomic loci. Assembles with POLR3D/RPC4 forming a subcomplex that binds the Pol III core. Enables recruitment of Pol III at transcription initiation site and drives transcription initiation from both type 2 and type 3 DNA promoters. Required for efficient transcription termination and reinitiation. Plays a key role in sensing and limiting infection by intracellular bacteria and DNA viruses. Acts as a nuclear and cytosolic DNA sensor involved in innate immune response. Can sense non-self dsDNA that serves as template for transcription into dsRNA. The non-self RNA polymerase III transcripts, such as Epstein-Barr virus-encoded RNAs (EBERs) induce type I interferon and NF-kappa-B through the RIG-I pathway. The protein is DNA-directed RNA polymerase III subunit RPC5 of Homo sapiens (Human).